The chain runs to 249 residues: Triosephosphate isomerase (249 aa).

11–13 (NWK) lines the substrate pocket. The Electrophile role is filled by His91. Glu163 serves as the catalytic Proton acceptor. Substrate contacts are provided by residues Gly169, Ser208, and 229–230 (GG).

This sequence belongs to the triosephosphate isomerase family. As to quaternary structure, homodimer.

The protein localises to the cytoplasm. The catalysed reaction is D-glyceraldehyde 3-phosphate = dihydroxyacetone phosphate. It participates in carbohydrate biosynthesis; gluconeogenesis. Its pathway is carbohydrate degradation; glycolysis; D-glyceraldehyde 3-phosphate from glycerone phosphate: step 1/1. Its function is as follows. Involved in the gluconeogenesis. Catalyzes stereospecifically the conversion of dihydroxyacetone phosphate (DHAP) to D-glyceraldehyde-3-phosphate (G3P). This Pseudoalteromonas translucida (strain TAC 125) protein is Triosephosphate isomerase.